Consider the following 359-residue polypeptide: tRNA N6-adenosine threonylcarbamoyltransferase (359 aa).

His115 and His119 together coordinate Fe cation. Substrate is bound by residues 137–141 (LVSGG), Asp170, Gly183, and Asn283. Asp311 contacts Fe cation. The interval 328-359 (APDSLDIAPRSRWPLDEKSAPVFGTGRRGAKA) is disordered.

This sequence belongs to the KAE1 / TsaD family. It depends on Fe(2+) as a cofactor.

The protein resides in the cytoplasm. The enzyme catalyses L-threonylcarbamoyladenylate + adenosine(37) in tRNA = N(6)-L-threonylcarbamoyladenosine(37) in tRNA + AMP + H(+). Its function is as follows. Required for the formation of a threonylcarbamoyl group on adenosine at position 37 (t(6)A37) in tRNAs that read codons beginning with adenine. Is involved in the transfer of the threonylcarbamoyl moiety of threonylcarbamoyl-AMP (TC-AMP) to the N6 group of A37, together with TsaE and TsaB. TsaD likely plays a direct catalytic role in this reaction. This chain is tRNA N6-adenosine threonylcarbamoyltransferase, found in Brucella canis (strain ATCC 23365 / NCTC 10854 / RM-666).